Reading from the N-terminus, the 330-residue chain is Aspartate--ammonia ligase (330 aa).

This sequence belongs to the class-II aminoacyl-tRNA synthetase family. AsnA subfamily.

The protein localises to the cytoplasm. It carries out the reaction L-aspartate + NH4(+) + ATP = L-asparagine + AMP + diphosphate + H(+). Its pathway is amino-acid biosynthesis; L-asparagine biosynthesis; L-asparagine from L-aspartate (ammonia route): step 1/1. This chain is Aspartate--ammonia ligase, found in Treponema pallidum (strain Nichols).